A 231-amino-acid chain; its full sequence is Orotidine 5'-phosphate decarboxylase (231 aa).

Substrate is bound by residues Asp11, Lys33, 60-69, Thr120, Arg181, Gln190, Gly210, and Arg211; that span reads DLKFHDIPNT. The Proton donor role is filled by Lys62.

It belongs to the OMP decarboxylase family. Type 1 subfamily. As to quaternary structure, homodimer.

It carries out the reaction orotidine 5'-phosphate + H(+) = UMP + CO2. The protein operates within pyrimidine metabolism; UMP biosynthesis via de novo pathway; UMP from orotate: step 2/2. Functionally, catalyzes the decarboxylation of orotidine 5'-monophosphate (OMP) to uridine 5'-monophosphate (UMP). The protein is Orotidine 5'-phosphate decarboxylase of Colwellia psychrerythraea (strain 34H / ATCC BAA-681) (Vibrio psychroerythus).